The sequence spans 100 residues: Cell division topological specificity factor (100 aa).

This sequence belongs to the MinE family.

In terms of biological role, prevents the cell division inhibition by proteins MinC and MinD at internal division sites while permitting inhibition at polar sites. This ensures cell division at the proper site by restricting the formation of a division septum at the midpoint of the long axis of the cell. This Synechococcus sp. (strain JA-2-3B'a(2-13)) (Cyanobacteria bacterium Yellowstone B-Prime) protein is Cell division topological specificity factor.